We begin with the raw amino-acid sequence, 231 residues long: ATP phosphoribosyltransferase (231 aa).

Belongs to the ATP phosphoribosyltransferase family. Short subfamily. As to quaternary structure, heteromultimer composed of HisG and HisZ subunits.

The protein resides in the cytoplasm. The catalysed reaction is 1-(5-phospho-beta-D-ribosyl)-ATP + diphosphate = 5-phospho-alpha-D-ribose 1-diphosphate + ATP. It participates in amino-acid biosynthesis; L-histidine biosynthesis; L-histidine from 5-phospho-alpha-D-ribose 1-diphosphate: step 1/9. Functionally, catalyzes the condensation of ATP and 5-phosphoribose 1-diphosphate to form N'-(5'-phosphoribosyl)-ATP (PR-ATP). Has a crucial role in the pathway because the rate of histidine biosynthesis seems to be controlled primarily by regulation of HisG enzymatic activity. In Psychrobacter arcticus (strain DSM 17307 / VKM B-2377 / 273-4), this protein is ATP phosphoribosyltransferase.